The chain runs to 111 residues: Microtubule nucleation factor SSNA1 (111 aa).

A coiled-coil region spans residues 6–71 (QALQNHNNEL…ARKTETKNEY (66 aa)).

The protein belongs to the SSNA1 family. In terms of assembly, self-assembles into fibrils in a head-to-tail fashion.

It is found in the cytoplasm. It localises to the cytoskeleton. The protein localises to the flagellum basal body. Its subcellular location is the flagellum axoneme. Microtubule-binding protein which stabilizes dynamic microtubules by slowing growth and shrinkage at both plus and minus ends and serves as a sensor of microtubule damage. Induces microtubule branching which is mediated by the formation of long SSNA1 fibrils which guide microtubule protofilaments to split apart from the mother microtubule and form daughter microtubules. Required for cell division. In Chlamydomonas reinhardtii (Chlamydomonas smithii), this protein is Microtubule nucleation factor SSNA1.